The primary structure comprises 777 residues: Zinc finger FYVE domain-containing protein 1 (777 aa).

Positions 416–777 are required for localization in the lipid droplets; sequence MAHSSFFPDE…FNCNKKPGDL (362 aa). 2 FYVE-type zinc fingers span residues 598–659 and 715–775; these read NSQI…DARN and DHEI…KKPG. Residues cysteine 604, cysteine 607, cysteine 620, cysteine 623, cysteine 628, cysteine 631, cysteine 651, cysteine 654, cysteine 721, cysteine 724, cysteine 737, cysteine 740, cysteine 745, cysteine 748, cysteine 767, and cysteine 770 each coordinate Zn(2+).

Interacts with RAB18 (in GTP-bound form). Interacts with BSCL2 in a RAB18-dependent manner. Interacts with ZW10. Ubiquitous.

Its subcellular location is the golgi apparatus. The protein resides in the golgi stack. It is found in the endoplasmic reticulum. The protein localises to the preautophagosomal structure. It localises to the lipid droplet. Its subcellular location is the mitochondrion. Plays a role in the formation of lipid droplets (LDs) which are storage organelles at the center of lipid and energy homeostasis. Regulates the morphology, size and distribution of LDs. Mediates the formation of endoplasmic reticulum-lipid droplets (ER-LD) contact sites by forming a complex with RAB18 and ZW10. Binds to phosphatidylinositol 3-phosphate (PtdIns3P) through FYVE-type zinc finger. This Mus musculus (Mouse) protein is Zinc finger FYVE domain-containing protein 1 (Zfyve1).